A 379-amino-acid chain; its full sequence is DnaJ homolog subfamily B member 14 (379 aa).

Over 1–244 the chain is Cytoplasmic; that stretch reads MEGNRDEAEK…GHEREEERGD (244 aa). Positions 55–94 are disordered; it reads STAGNSPHCRKPSGGGDQSKPNCTKDSSSGSGESGKGYTK. One can recognise a J domain in the interval 108 to 172; sequence NYYEVLGVTK…EKRKQYDLTG (65 aa). A disordered region spans residues 221–241; sequence GRAGYSNQHQHRHSGHEREEE. The helical transmembrane segment at 245 to 265 threads the bilayer; the sequence is GGFSVFIQLMPIIVLILVSLL. The Lumenal portion of the chain corresponds to 266-379; it reads SQLMVSNPPY…ERLTSIYKGG (114 aa).

The protein belongs to the DnaJ family. DNAJB12/DNAJB14 subfamily. In terms of assembly, interacts (via J domain) with HSPA8/Hsc70. Forms a multiprotein complex, at least composed of DNAJB12, DNAJB14, HSPA8/Hsc70 and SGTA; interaction with DNAJB14 and HSPA8/Hsc70 is direct.

Its subcellular location is the endoplasmic reticulum membrane. It is found in the nucleus membrane. Functionally, acts as a co-chaperone with HSPA8/Hsc70; required to promote protein folding and trafficking, prevent aggregation of client proteins, and promote unfolded proteins to endoplasmic reticulum-associated degradation (ERAD) pathway. Acts by determining HSPA8/Hsc70's ATPase and polypeptide-binding activities. Can also act independently of HSPA8/Hsc70: together with DNAJB12, acts as a chaperone that promotes maturation of potassium channels KCND2 and KCNH2 by stabilizing nascent channel subunits and assembling them into tetramers. While stabilization of nascent channel proteins is dependent on HSPA8/Hsc70, the process of oligomerization of channel subunits is independent of HSPA8/Hsc70. When overexpressed, forms membranous structures together with DNAJB12 and HSPA8/Hsc70 within the nucleus; the role of these structures, named DJANGOs, is still unclear. In Bos taurus (Bovine), this protein is DnaJ homolog subfamily B member 14 (DNAJB14).